Consider the following 269-residue polypeptide: Chromophore lyase CRL, chloroplastic (269 aa).

Residues 19-36 form a helical membrane-spanning segment; sequence ARGLVVKTLVLIGGALLI.

The protein belongs to the CpcT/CpeT biliprotein lyase family. As to expression, mostly expressed in shoot apices, to a lower extent, in leaves, inflorescence stems, buds and cotyledons, and, at low levels, in roots and siliques.

It localises to the plastid. It is found in the chloroplast outer membrane. Its function is as follows. Covalently attaches a chromophore to Cys residue(s) of phycobiliproteins. Required for plastid division, and involved in cell differentiation and regulation of the cell division plane. Maintenance of plastid homeostasis controls plant preconditioning to stress and stress acclimation. In terms of biological role, confers sensitivity to cabbage leaf curl virus (CaLCuV), probably by supporting viral movement. This is Chromophore lyase CRL, chloroplastic (CRL) from Arabidopsis thaliana (Mouse-ear cress).